Here is a 518-residue protein sequence, read N- to C-terminus: Serine hydroxymethyltransferase, mitochondrial (518 aa).

Residues 1 to 31 constitute a mitochondrion transit peptide; that stretch reads MAMAMALRKLSSSVNKSSRPLFSASSLYYKS. K287 carries the N6-(pyridoxal phosphate)lysine modification.

It belongs to the SHMT family. In terms of assembly, homotetramer. The cofactor is pyridoxal 5'-phosphate.

It is found in the mitochondrion. It carries out the reaction (6R)-5,10-methylene-5,6,7,8-tetrahydrofolate + glycine + H2O = (6S)-5,6,7,8-tetrahydrofolate + L-serine. It functions in the pathway one-carbon metabolism; tetrahydrofolate interconversion. Functionally, catalyzes the interconversion of serine and glycine. This is Serine hydroxymethyltransferase, mitochondrial from Pisum sativum (Garden pea).